A 766-amino-acid polypeptide reads, in one-letter code: Ribonuclease Z, mitochondrial (766 aa).

The transit peptide at 1-25 (MYLVKSAGSPIYRTLRTLTTSNLMA) directs the protein to the mitochondrion.

The protein belongs to the RNase Z family. In terms of assembly, homodimer. The cofactor is Zn(2+).

Its subcellular location is the nucleus. The protein localises to the mitochondrion. It carries out the reaction Endonucleolytic cleavage of RNA, removing extra 3' nucleotides from tRNA precursor, generating 3' termini of tRNAs. A 3'-hydroxy group is left at the tRNA terminus and a 5'-phosphoryl group is left at the trailer molecule.. Functionally, zinc phosphodiesterase, which displays some tRNA 3'-processing endonuclease activity of nuclear and mitochondrial pre-tRNA. Probably involved in tRNA maturation, by removing a 3'-trailer from precursor tRNA. May participate in tRNA processing in the developing embryo. This Drosophila melanogaster (Fruit fly) protein is Ribonuclease Z, mitochondrial.